An 815-amino-acid polypeptide reads, in one-letter code: MEDGFSSYSSLYDTSSLLQFCNDDSASAASSMEVTDRIASLEQRVQMQEDDIQLLKSALADVVRRLNITEEQQAVLNRKGPTKARPLMQTLPLRTTVNNGTVLPKKPTGSLPSPSGVRKETAVPATKSNIKRTSSSERVSPGGRRESNGDSRGNRNRTGSTSSSSSGKKNSESKPKEPVFSAEEGYVKMFLRGRPVTMYMPKDQVDSYSLEAKVELPTKRLKLEWVYGYRGRDCRNNLYLLPTGETVYFIASVVVLYNVEEQLQRHYAGHNDDVKCLAVHPDRITIATGQVAGTSKDGKQLPPHVRIWDSVTLNTLHVIGIGFFDRAVTCIAFSKSNGGTNLCAVDDSNDHVLSVWDWQKEEKLADVKCSNEAVFAADFHPTDTNIIVTCGKSHLYFWTLEGSSLNKKQGLFEKQEKPKFVLCVTFSENGDTITGDSSGNILVWGKGTNRISYAVQGAHEGGIFALCMLRDGTLVSGGGKDRKLISWSGNYQKLRKTEIPEQFGPIRTVAEGKGDVILIGTTRNFVLQGTLSGDFTPITQGHTDELWGLAIHASKSQFLTCGHDKHATLWDAVGHRPVWDKIIEDPAQSSGFHPSGSVVAVGTLTGRWFVFDTETKDLVTVHTDGNEQLSVMRYSPDGNFLAIGSHDNCIYIYGVSDNGRKYTRVGKCSGHSSFITHLDWSVNSQFLVSNSGDYEILYWVPSACKQVVSVETTRDIEWATYTCTLGFHVFGVWPEGSDGTDINAVCRAHEKKLLSTGDDFGKVHLFSYPCSQFRAPSHIYGGHSSHVTNVDFLCEDSHLISTGGKDTSIMQWRVI.

Residues 31-72 are a coiled coil; the sequence is SMEVTDRIASLEQRVQMQEDDIQLLKSALADVVRRLNITEEQ. The disordered stretch occupies residues 77–179; the sequence is NRKGPTKARP…NSESKPKEPV (103 aa). Polar residues predominate over residues 92–101; the sequence is PLRTTVNNGT. Residue S113 is modified to Phosphoserine. Over residues 126-138 the composition is skewed to polar residues; sequence TKSNIKRTSSSER. Positions 143–153 are enriched in basic and acidic residues; the sequence is GRRESNGDSRG. The segment covering 156-168 has biased composition (low complexity); the sequence is NRTGSTSSSSSGK. Positions 176-815 are tandem atypical propeller in EMLs; that stretch reads KEPVFSAEEG…DTSIMQWRVI (640 aa). 12 WD repeats span residues 261–310, 315–358, 363–400, 409–446, 450–489, 493–530, 535–572, 578–613, 617–655, 664–701, 709–768, and 775–814; these read EQLQ…IWDS, TLHV…VWDW, KLAD…FWTL, QGLF…VWGK, RISY…SWSG, KLRK…LQGT, FTPI…LWDA, VWDK…VFDT, DLVT…IYGV, RVGK…YWVP, SVET…LFSY, and APSH…QWRV.

This sequence belongs to the WD repeat EMAP family. In terms of assembly, homotrimer; self-association is mediated by the N-terminal coiled coil. Does not interact with EML3. Binds repolymerizing microtubules. Binds unpolymerized tubulins via its WD repeat region. Interacts with TASOR. In terms of tissue distribution, ubiquitous; expressed in most tissues with the exception of thymus and peripheral blood lymphocytes.

The protein resides in the cytoplasm. The protein localises to the perinuclear region. It is found in the cytoskeleton. Functionally, modulates the assembly and organization of the microtubule cytoskeleton, and probably plays a role in regulating the orientation of the mitotic spindle and the orientation of the plane of cell division. Required for normal proliferation of neuronal progenitor cells in the developing brain and for normal brain development. Does not affect neuron migration per se. This is Echinoderm microtubule-associated protein-like 1 (EML1) from Homo sapiens (Human).